Here is a 45-residue protein sequence, read N- to C-terminus: Somatoliberin (45 aa).

The protein belongs to the glucagon family.

It localises to the secreted. Functionally, GRF is released by the hypothalamus and acts on the adenohypophyse to stimulate the secretion of growth hormone. In Cyprinus carpio (Common carp), this protein is Somatoliberin (ghrh).